Reading from the N-terminus, the 81-residue chain is Trefoil factor 1 (81 aa).

An N-terminal signal peptide occupies residues 1 to 21 (MEHKVTCVLAMVLMLALSSLA). Glutamine 22 is modified (pyrrolidone carboxylic acid). Residues 26 to 69 (ETCAVIPRERINCGFPGVTAQQCKEKGCCFDDSVRGFPWCFRPL) form the P-type domain. Intrachain disulfides connect cysteine 28–cysteine 54, cysteine 38–cysteine 53, and cysteine 48–cysteine 65.

Its subcellular location is the secreted. Its function is as follows. Stabilizer of the mucous gel overlying the gastrointestinal mucosa that provides a physical barrier against various noxious agents. In Rattus norvegicus (Rat), this protein is Trefoil factor 1 (Tff1).